The primary structure comprises 331 residues: UPF0324 membrane protein SACOL0411 (331 aa).

11 helical membrane passes run 9–26 (FMIG…SFLA), 31–48 (ILDK…AILY), 69–88 (LLRF…DIIG), 93–115 (LLAI…NKLL), 122–144 (ALLL…APIF), 154–176 (SIGI…YAIF), 183–202 (YGAW…LAGG), 217–234 (LGRV…ILIM), 247–269 (ISIP…VTIP), 273–295 (LNIL…GLNV), and 308–330 (LMTI…HWLY).

The protein belongs to the UPF0324 family.

The protein resides in the cell membrane. The polypeptide is UPF0324 membrane protein SACOL0411 (Staphylococcus aureus (strain COL)).